The chain runs to 314 residues: 4-hydroxy-3-methylbut-2-enyl diphosphate reductase (314 aa).

[4Fe-4S] cluster is bound at residue C12. (2E)-4-hydroxy-3-methylbut-2-enyl diphosphate contacts are provided by H41 and H74. H41 and H74 together coordinate dimethylallyl diphosphate. Positions 41 and 74 each coordinate isopentenyl diphosphate. Residue C96 participates in [4Fe-4S] cluster binding. Position 124 (H124) interacts with (2E)-4-hydroxy-3-methylbut-2-enyl diphosphate. H124 contacts dimethylallyl diphosphate. Residue H124 coordinates isopentenyl diphosphate. E126 (proton donor) is an active-site residue. T167 contacts (2E)-4-hydroxy-3-methylbut-2-enyl diphosphate. Position 197 (C197) interacts with [4Fe-4S] cluster. 4 residues coordinate (2E)-4-hydroxy-3-methylbut-2-enyl diphosphate: S225, S226, N227, and S269. Residues S225, S226, N227, and S269 each contribute to the dimethylallyl diphosphate site. The isopentenyl diphosphate site is built by S225, S226, N227, and S269.

The protein belongs to the IspH family. Requires [4Fe-4S] cluster as cofactor.

The catalysed reaction is isopentenyl diphosphate + 2 oxidized [2Fe-2S]-[ferredoxin] + H2O = (2E)-4-hydroxy-3-methylbut-2-enyl diphosphate + 2 reduced [2Fe-2S]-[ferredoxin] + 2 H(+). The enzyme catalyses dimethylallyl diphosphate + 2 oxidized [2Fe-2S]-[ferredoxin] + H2O = (2E)-4-hydroxy-3-methylbut-2-enyl diphosphate + 2 reduced [2Fe-2S]-[ferredoxin] + 2 H(+). The protein operates within isoprenoid biosynthesis; dimethylallyl diphosphate biosynthesis; dimethylallyl diphosphate from (2E)-4-hydroxy-3-methylbutenyl diphosphate: step 1/1. Its pathway is isoprenoid biosynthesis; isopentenyl diphosphate biosynthesis via DXP pathway; isopentenyl diphosphate from 1-deoxy-D-xylulose 5-phosphate: step 6/6. Its function is as follows. Catalyzes the conversion of 1-hydroxy-2-methyl-2-(E)-butenyl 4-diphosphate (HMBPP) into a mixture of isopentenyl diphosphate (IPP) and dimethylallyl diphosphate (DMAPP). Acts in the terminal step of the DOXP/MEP pathway for isoprenoid precursor biosynthesis. The chain is 4-hydroxy-3-methylbut-2-enyl diphosphate reductase from Actinobacillus pleuropneumoniae serotype 5b (strain L20).